The following is a 90-amino-acid chain: uncharacterized protein (90 aa).

This is an uncharacterized protein from Bacillus subtilis (strain 168).